A 451-amino-acid chain; its full sequence is Probable tyrosyl-DNA phosphodiesterase (451 aa).

The tract at residues 1–34 (MKRTIQETPGPSSTTVPPPKKLNSQRNGSNLEPG) is disordered. Residues 22–32 (LNSQRNGSNLE) show a composition bias toward polar residues. H131 (nucleophile) is an active-site residue. A substrate-binding site is contributed by K133. Residues 266 to 269 (SIGS) are interaction with DNA. The Proton donor/acceptor role is filled by H356. K358 is a substrate binding site.

The protein belongs to the tyrosyl-DNA phosphodiesterase family.

The protein resides in the nucleus. DNA repair enzyme that can remove a variety of covalent adducts from DNA through hydrolysis of a 3'-phosphodiester bond, giving rise to DNA with a free 3' phosphate. Catalyzes the hydrolysis of dead-end complexes between DNA and the topoisomerase I active site tyrosine residue. Hydrolyzes 3'-phosphoglycolates on protruding 3' ends on DNA double-strand breaks due to DNA damage by radiation and free radicals. Acts on blunt-ended double-strand DNA breaks and on single-stranded DNA. May have low 3'exonuclease activity and may be able to remove a single nucleoside from the 3'end of DNA and RNA molecules with 3'hydroxyl groups. Has no exonuclease activity towards DNA or RNA with a 3'phosphate. The sequence is that of Probable tyrosyl-DNA phosphodiesterase from Caenorhabditis elegans.